The sequence spans 168 residues: uncharacterized protein (168 aa).

The helical transmembrane segment at 5–24 threads the bilayer; sequence IAWASACLLLVMLTGFFTIG.

It localises to the membrane. This is an uncharacterized protein from Bacillus subtilis (strain 168).